Consider the following 362-residue polypeptide: Peptide chain release factor 1 (362 aa).

An N5-methylglutamine modification is found at glutamine 237.

It belongs to the prokaryotic/mitochondrial release factor family. In terms of processing, methylated by PrmC. Methylation increases the termination efficiency of RF1.

Its subcellular location is the cytoplasm. Functionally, peptide chain release factor 1 directs the termination of translation in response to the peptide chain termination codons UAG and UAA. This Vibrio atlanticus (strain LGP32) (Vibrio splendidus (strain Mel32)) protein is Peptide chain release factor 1.